Here is a 603-residue protein sequence, read N- to C-terminus: Phosphomethylpyrimidine synthase (603 aa).

Substrate is bound by residues Asn224, Met253, Tyr282, His318, 338–340, 379–382, and Glu418; these read SRG and DGLR. His422 is a binding site for Zn(2+). Tyr445 serves as a coordination point for substrate. His486 serves as a coordination point for Zn(2+). [4Fe-4S] cluster-binding residues include Cys566, Cys569, and Cys574.

It belongs to the ThiC family. Homodimer. [4Fe-4S] cluster serves as cofactor.

The catalysed reaction is 5-amino-1-(5-phospho-beta-D-ribosyl)imidazole + S-adenosyl-L-methionine = 4-amino-2-methyl-5-(phosphooxymethyl)pyrimidine + CO + 5'-deoxyadenosine + formate + L-methionine + 3 H(+). Its pathway is cofactor biosynthesis; thiamine diphosphate biosynthesis. Catalyzes the synthesis of the hydroxymethylpyrimidine phosphate (HMP-P) moiety of thiamine from aminoimidazole ribotide (AIR) in a radical S-adenosyl-L-methionine (SAM)-dependent reaction. The sequence is that of Phosphomethylpyrimidine synthase from Xylella fastidiosa (strain Temecula1 / ATCC 700964).